Consider the following 273-residue polypeptide: DNA repair protein RecO (273 aa).

The protein belongs to the RecO family.

Functionally, involved in DNA repair and RecF pathway recombination. The chain is DNA repair protein RecO from Mycolicibacterium gilvum (strain PYR-GCK) (Mycobacterium gilvum (strain PYR-GCK)).